Reading from the N-terminus, the 808-residue chain is uncharacterized protein (808 aa).

In terms of domain architecture, EF-hand 1 spans 6–41 (SRSEKVKRIFQQFDGNHDGGLNREEMAALVVAVNPR). TPR repeat units lie at residues 234 to 267 (FDGH…QPTD), 269 to 301 (RPHF…AESG), 310 to 343 (PQIY…CPTH), 344 to 377 (FRAL…KPDY), 378 to 411 (ADAH…KPGH), 412 to 445 (VDAL…WPNH), and 447 to 479 (RAQL…TNRV). Positions 600–635 (AIKAINEKILALLDDSGSGRVDMGMFYAVIAPLCGG) constitute an EF-hand 2 domain. Positions 773–794 (FKQEEYKFREYESEAEAMKAKC) form a coiled coil.

This is an uncharacterized protein from Arabidopsis thaliana (Mouse-ear cress).